The primary structure comprises 546 residues: Medium-chain-fatty-acid--CoA ligase (546 aa).

Residue threonine 185 participates in Mg(2+) binding. ATP contacts are provided by tryptophan 235 and threonine 329. Residue glutamate 330 coordinates Mg(2+). Residues aspartate 417, lysine 434, lysine 438, and tryptophan 443 each coordinate ATP.

This sequence belongs to the ATP-dependent AMP-binding enzyme family.

The protein resides in the cytoplasm. The catalysed reaction is a medium-chain fatty acid + ATP + CoA = a medium-chain fatty acyl-CoA + AMP + diphosphate. Its pathway is lipid metabolism; fatty acid metabolism. The protein is Medium-chain-fatty-acid--CoA ligase of Ectopseudomonas oleovorans (Pseudomonas oleovorans).